A 227-amino-acid polypeptide reads, in one-letter code: ATP-dependent dethiobiotin synthetase BioD (227 aa).

ATP is bound at residue 13 to 18 (DIGKTY). T17 contacts Mg(2+). K38 is an active-site residue. Residue S42 participates in substrate binding. ATP-binding positions include D55, 116-119 (EGSG), and 179-180 (NN). Positions 55 and 116 each coordinate Mg(2+).

The protein belongs to the dethiobiotin synthetase family. In terms of assembly, homodimer. Requires Mg(2+) as cofactor.

The protein localises to the cytoplasm. The enzyme catalyses (7R,8S)-7,8-diammoniononanoate + CO2 + ATP = (4R,5S)-dethiobiotin + ADP + phosphate + 3 H(+). It functions in the pathway cofactor biosynthesis; biotin biosynthesis; biotin from 7,8-diaminononanoate: step 1/2. Its function is as follows. Catalyzes a mechanistically unusual reaction, the ATP-dependent insertion of CO2 between the N7 and N8 nitrogen atoms of 7,8-diaminopelargonic acid (DAPA, also called 7,8-diammoniononanoate) to form a ureido ring. In Clostridium botulinum (strain Alaska E43 / Type E3), this protein is ATP-dependent dethiobiotin synthetase BioD.